Consider the following 467-residue polypeptide: Ribosomal protein uS12 methylthiotransferase RimO (467 aa).

The MTTase N-terminal domain maps to 1–110; it reads MDLHGCAKNQ…LPQLIDSMFP (110 aa). Residues Cys-6, Cys-42, Cys-73, Cys-153, Cys-157, and Cys-160 each coordinate [4Fe-4S] cluster. A Radical SAM core domain is found at 139-386; the sequence is LNFPRSTYIK…QNAQTSITEK (248 aa). Residues 389 to 467 form the TRAM domain; the sequence is DSFIGKEIEV…NGFDLEAVAV (79 aa).

The protein belongs to the methylthiotransferase family. RimO subfamily. The cofactor is [4Fe-4S] cluster.

The protein resides in the cytoplasm. The enzyme catalyses L-aspartate(89)-[ribosomal protein uS12]-hydrogen + (sulfur carrier)-SH + AH2 + 2 S-adenosyl-L-methionine = 3-methylsulfanyl-L-aspartate(89)-[ribosomal protein uS12]-hydrogen + (sulfur carrier)-H + 5'-deoxyadenosine + L-methionine + A + S-adenosyl-L-homocysteine + 2 H(+). Functionally, catalyzes the methylthiolation of an aspartic acid residue of ribosomal protein uS12. The protein is Ribosomal protein uS12 methylthiotransferase RimO of Treponema denticola (strain ATCC 35405 / DSM 14222 / CIP 103919 / JCM 8153 / KCTC 15104).